We begin with the raw amino-acid sequence, 156 residues long: Small ribosomal subunit protein uS7 (156 aa).

It belongs to the universal ribosomal protein uS7 family. In terms of assembly, part of the 30S ribosomal subunit. Contacts proteins S9 and S11.

One of the primary rRNA binding proteins, it binds directly to 16S rRNA where it nucleates assembly of the head domain of the 30S subunit. Is located at the subunit interface close to the decoding center, probably blocks exit of the E-site tRNA. In Levilactobacillus brevis (strain ATCC 367 / BCRC 12310 / CIP 105137 / JCM 1170 / LMG 11437 / NCIMB 947 / NCTC 947) (Lactobacillus brevis), this protein is Small ribosomal subunit protein uS7.